Consider the following 397-residue polypeptide: Argininosuccinate synthase (397 aa).

Ala8–Ser16 serves as a coordination point for ATP. Tyr87 is an L-citrulline binding site. Gly117 lines the ATP pocket. Residues Thr119, Asn123, and Asp124 each coordinate L-aspartate. Asn123 contributes to the L-citrulline binding site. L-citrulline is bound by residues Arg127, Ser175, Glu259, and Tyr271.

The protein belongs to the argininosuccinate synthase family. Type 1 subfamily. In terms of assembly, homotetramer.

It is found in the cytoplasm. The enzyme catalyses L-citrulline + L-aspartate + ATP = 2-(N(omega)-L-arginino)succinate + AMP + diphosphate + H(+). The protein operates within amino-acid biosynthesis; L-arginine biosynthesis; L-arginine from L-ornithine and carbamoyl phosphate: step 2/3. This Streptomyces griseus subsp. griseus (strain JCM 4626 / CBS 651.72 / NBRC 13350 / KCC S-0626 / ISP 5235) protein is Argininosuccinate synthase.